The chain runs to 366 residues: Chorismate synthase (366 aa).

R48 provides a ligand contact to NADP(+). FMN contacts are provided by residues 125–127 (RSS), 238–239 (NA), G278, 293–297 (KPTSS), and R319.

It belongs to the chorismate synthase family. In terms of assembly, homotetramer. FMNH2 serves as cofactor.

The enzyme catalyses 5-O-(1-carboxyvinyl)-3-phosphoshikimate = chorismate + phosphate. Its pathway is metabolic intermediate biosynthesis; chorismate biosynthesis; chorismate from D-erythrose 4-phosphate and phosphoenolpyruvate: step 7/7. Functionally, catalyzes the anti-1,4-elimination of the C-3 phosphate and the C-6 proR hydrogen from 5-enolpyruvylshikimate-3-phosphate (EPSP) to yield chorismate, which is the branch point compound that serves as the starting substrate for the three terminal pathways of aromatic amino acid biosynthesis. This reaction introduces a second double bond into the aromatic ring system. The protein is Chorismate synthase of Hydrogenovibrio crunogenus (strain DSM 25203 / XCL-2) (Thiomicrospira crunogena).